The primary structure comprises 495 residues: Prenylcysteine oxidase 1-like (495 aa).

The signal sequence occupies residues Met-1–Gly-22. Residues Asn-185 and Asn-343 are each glycosylated (N-linked (GlcNAc...) asparagine).

Belongs to the prenylcysteine oxidase family. FAD is required as a cofactor.

The protein resides in the secreted. Functionally, likely to have oxidoreductase activity. Required in the mevalonate pathway to regulate prenylation and enhances the bactericidal activity of neutrophils. The chain is Prenylcysteine oxidase 1-like (Pcyox1l) from Mus musculus (Mouse).